We begin with the raw amino-acid sequence, 223 residues long: Deoxyribose-phosphate aldolase 2 (223 aa).

The Proton donor/acceptor role is filled by D92. Catalysis depends on K154, which acts as the Schiff-base intermediate with acetaldehyde. K183 (proton donor/acceptor) is an active-site residue.

It belongs to the DeoC/FbaB aldolase family. DeoC type 1 subfamily.

The protein localises to the cytoplasm. The enzyme catalyses 2-deoxy-D-ribose 5-phosphate = D-glyceraldehyde 3-phosphate + acetaldehyde. It participates in carbohydrate degradation; 2-deoxy-D-ribose 1-phosphate degradation; D-glyceraldehyde 3-phosphate and acetaldehyde from 2-deoxy-alpha-D-ribose 1-phosphate: step 2/2. In terms of biological role, catalyzes a reversible aldol reaction between acetaldehyde and D-glyceraldehyde 3-phosphate to generate 2-deoxy-D-ribose 5-phosphate. This Oceanobacillus iheyensis (strain DSM 14371 / CIP 107618 / JCM 11309 / KCTC 3954 / HTE831) protein is Deoxyribose-phosphate aldolase 2.